A 305-amino-acid chain; its full sequence is Ribosomal protein L11 methyltransferase (305 aa).

Residues Thr-149, Gly-176, Asp-198, and Asn-240 each contribute to the S-adenosyl-L-methionine site.

This sequence belongs to the methyltransferase superfamily. PrmA family.

It localises to the cytoplasm. The catalysed reaction is L-lysyl-[protein] + 3 S-adenosyl-L-methionine = N(6),N(6),N(6)-trimethyl-L-lysyl-[protein] + 3 S-adenosyl-L-homocysteine + 3 H(+). Functionally, methylates ribosomal protein L11. This chain is Ribosomal protein L11 methyltransferase, found in Trichlorobacter lovleyi (strain ATCC BAA-1151 / DSM 17278 / SZ) (Geobacter lovleyi).